The primary structure comprises 455 residues: Phosphoglucosamine mutase (455 aa).

Ser103 (phosphoserine intermediate) is an active-site residue. The Mg(2+) site is built by Ser103, Asp243, Asp245, and Asp247. Ser103 carries the phosphoserine modification.

Belongs to the phosphohexose mutase family. Mg(2+) is required as a cofactor. Post-translationally, activated by phosphorylation.

The enzyme catalyses alpha-D-glucosamine 1-phosphate = D-glucosamine 6-phosphate. Catalyzes the conversion of glucosamine-6-phosphate to glucosamine-1-phosphate. This Halorhodospira halophila (strain DSM 244 / SL1) (Ectothiorhodospira halophila (strain DSM 244 / SL1)) protein is Phosphoglucosamine mutase.